The sequence spans 334 residues: HTH-type transcriptional repressor PurR (334 aa).

Residues 2-56 form the HTH lacI-type domain; the sequence is ATIKDVARLAGVSTTTVSHVINKTRFVAEATQEKVMKAVDELNYAPSAVARSLKC. Residues 4 to 23 constitute a DNA-binding region (H-T-H motif); the sequence is IKDVARLAGVSTTTVSHVIN. The DNA-binding element occupies 48–56; sequence SAVARSLKC. Hypoxanthine is bound by residues Phe-73, Lys-189, Phe-220, and Asp-274.

In terms of assembly, homodimer.

It functions in the pathway purine metabolism; purine nucleotide biosynthesis [regulation]. Is the main repressor of the genes involved in the de novo synthesis of purine nucleotides, regulating purB, purC, purEK, purF, purHD, purL, purMN and guaBA expression. PurR is allosterically activated to bind its cognate DNA by binding the purine corepressors, hypoxanthine or guanine, thereby effecting transcription repression. This is HTH-type transcriptional repressor PurR from Vibrio parahaemolyticus serotype O3:K6 (strain RIMD 2210633).